A 277-amino-acid polypeptide reads, in one-letter code: Basic leucine zipper 9 (277 aa).

The tract at residues 73-141 is disordered; the sequence is ADSPVSANKP…ESAKRSRRRK (69 aa). A Phosphoserine modification is found at Ser100. Over residues 109-118 the composition is skewed to polar residues; sequence AGQSEMTNDP. A bZIP domain is found at 120–183; that stretch reads DLKRIRRMNS…RSAGTNNRVL (64 aa). Residues 122–141 form a basic motif region; that stretch reads KRIRRMNSNRESAKRSRRRK. A Nuclear localization signal motif is present at residues 124-131; it reads IRRMNSNR. Residues 148–162 are leucine-zipper; the sequence is LETQVDSLKGDNSTL.

The protein belongs to the bZIP family. Homodimer. Interacts with BZIP1, BZIP2, BZIP10, BZIP11, BZIP25, BZIP44, BZIP53 and BZIP63. In terms of processing, phosphorylated. Expressed in roots, shoots, stems, young leaves, and flowers, mostly in vascular tissues (e.g. phloem).

It is found in the nucleus. In terms of biological role, transcription factor. In Arabidopsis thaliana (Mouse-ear cress), this protein is Basic leucine zipper 9 (BZIP9).